Here is a 342-residue protein sequence, read N- to C-terminus: Protease HtpX homolog (342 aa).

The next 2 helical transmembrane spans lie at 6–26 (TAMLLAFMTALFMGVGFLIGG) and 28–48 (GGMMIALVIAGAMNLFSYWNS). His-130 serves as a coordination point for Zn(2+). The active site involves Glu-131. Residue His-134 coordinates Zn(2+). Transmembrane regions (helical) follow at residues 145–165 (ITATLAGAISMLGNFAFFFGG) and 173–193 (GGGIIGPLVAMIVAPFAAMLV). A Zn(2+)-binding site is contributed by Glu-202. A disordered region spans residues 290–342 (PQHSKPAASGPWGSSAERSTDDPWGVKGGASTRSVPKIGRRGKDNDAPKGPWN).

It belongs to the peptidase M48B family. Zn(2+) is required as a cofactor.

The protein resides in the cell inner membrane. This chain is Protease HtpX homolog, found in Allorhizobium ampelinum (strain ATCC BAA-846 / DSM 112012 / S4) (Agrobacterium vitis (strain S4)).